The sequence spans 83 residues: Short neurotoxin 3FTx-Oxy4 (83 aa).

The first 21 residues, 1–21 (MKTLLLTLVVVTIVCLDLGYT), serve as a signal peptide directing secretion. 4 cysteine pairs are disulfide-bonded: C24–C45, C38–C62, C64–C75, and C76–C81.

The protein belongs to the three-finger toxin family. Short-chain subfamily. Type I alpha-neurotoxin sub-subfamily. Expressed by the venom gland.

Its subcellular location is the secreted. Binds to muscle nicotinic acetylcholine receptor (nAChR) and inhibit acetylcholine from binding to the receptor, thereby impairing neuromuscular transmission. In Oxyuranus microlepidotus (Inland taipan), this protein is Short neurotoxin 3FTx-Oxy4.